We begin with the raw amino-acid sequence, 216 residues long: MTRLLHIQCSPRLRRSASLEIAHSFIQSYRQQRPDTEVTTLDLWSLDLPELDQTAMDAKYAQLAGQPLGNAEQRAWARLQALAEPLHQADLLVLSIPLWNFSIPYKLKHFIDLVSHQGILFSFDPENSLQGLLRNKTAVAAYARGLDFSSRSSTPAPAFDFQKPYIEAWLNFIGIANQHSLIVEKTILGPDIDQASRQAAAEQAQALAQQLAARQY.

Residues S10 and S16–S18 contribute to the FMN site.

Belongs to the azoreductase type 1 family. As to quaternary structure, homodimer. Requires FMN as cofactor.

The enzyme catalyses 2 a quinone + NADH + H(+) = 2 a 1,4-benzosemiquinone + NAD(+). It carries out the reaction N,N-dimethyl-1,4-phenylenediamine + anthranilate + 2 NAD(+) = 2-(4-dimethylaminophenyl)diazenylbenzoate + 2 NADH + 2 H(+). Quinone reductase that provides resistance to thiol-specific stress caused by electrophilic quinones. Its function is as follows. Also exhibits azoreductase activity. Catalyzes the reductive cleavage of the azo bond in aromatic azo compounds to the corresponding amines. The sequence is that of FMN-dependent NADH:quinone oxidoreductase 3 from Pseudomonas fluorescens (strain ATCC BAA-477 / NRRL B-23932 / Pf-5).